Here is a 324-residue protein sequence, read N- to C-terminus: Pepsin-2B (324 aa).

The Peptidase A1 domain maps to 14–321 (YYGVISIGTP…DRTNNKVGFA (308 aa)). Residue Asp32 is part of the active site. Cys45 and Cys50 form a disulfide bridge. The segment at 86–109 (QDTVSVGGGSDPNQELGESQTEPG) is disordered. Over residues 96–107 (DPNQELGESQTE) the composition is skewed to polar residues. Residues Cys206 and Cys209 are joined by a disulfide bond. Residue Asp214 is part of the active site. A disulfide bridge links Cys247 with Cys280.

The protein belongs to the peptidase A1 family.

The sequence is that of Pepsin-2B from Gadus morhua (Atlantic cod).